The sequence spans 473 residues: Ornithine aminotransferase, mitochondrial (473 aa).

Residues 1–32 constitute a mitochondrion transit peptide; that stretch reads MAAALARRGGGGLARALARGRGMCSATAAERA. The residue at position 293 (Lys293) is an N6-(pyridoxal phosphate)lysine.

This sequence belongs to the class-III pyridoxal-phosphate-dependent aminotransferase family. In terms of assembly, homotetramer. Pyridoxal 5'-phosphate serves as cofactor.

Its subcellular location is the mitochondrion matrix. It catalyses the reaction a 2-oxocarboxylate + L-ornithine = L-glutamate 5-semialdehyde + an L-alpha-amino acid. It participates in amino-acid biosynthesis; L-proline biosynthesis; L-glutamate 5-semialdehyde from L-ornithine: step 1/1. Functionally, confers drought and oxidative stress tolerance mainly through enhancing ROS-scavenging capacity and Pro pre-accumulation. The sequence is that of Ornithine aminotransferase, mitochondrial (OAT) from Oryza sativa subsp. japonica (Rice).